We begin with the raw amino-acid sequence, 460 residues long: Cyclic 2,3-diphosphoglycerate synthetase (460 aa).

Homodimer.

Its subcellular location is the cytoplasm. The enzyme catalyses (2R)-2,3-bisphosphoglycerate + ATP + H(+) = cyclic (2R)-2,3-bisphosphoglycerate + ADP + phosphate. Its function is as follows. Catalyzes the formation of cyclic 2,3-diphosphoglycerate (cDPG) by formation of an intramolecular phosphoanhydride bond at the expense of ATP. It is also able to catalyze the hydrolysis of cDPG but with significant slower rates (8-10 times). May be involved in thermoadaptation. The protein is Cyclic 2,3-diphosphoglycerate synthetase (cpgS) of Methanothermus fervidus (strain ATCC 43054 / DSM 2088 / JCM 10308 / V24 S).